The following is an 846-amino-acid chain: Cap-specific mRNA (nucleoside-2'-O-)-methyltransferase 1 (846 aa).

Residues 1-81 (MKRKSDSEQQ…LPDTLAEGSS (81 aa)) are disordered. A Bipartite nuclear localization signal motif is present at residues 2–20 (KRKSDSEQQPSVQCRKKKR). Residues 27–45 (NLSSTSDDDTQYSNHGTQE) are compositionally biased toward polar residues. One can recognise a G-patch domain in the interval 87–133 (YNSVSQKLMAKMGFREGEGLGKFGQGRKEIVETSKQKGRRGLGMVLK). Residues 203–207 (KSAFD) and Arg-218 contribute to the substrate site. Residues 231 to 450 (FFLNRAAMKM…ERYVVCRGLK (220 aa)) enclose the RrmJ-type SAM-dependent 2'-O-MTase domain. Residue Asn-234 coordinates S-adenosyl-L-methionine. Residue Lys-239 is part of the active site. S-adenosyl-L-methionine-binding positions include 277-283 (CAGPGGF) and 335-336 (DV). Residue Asp-364 is part of the active site. 374–376 (NIQ) contributes to the substrate binding site. Lys-404 serves as the catalytic Proton acceptor. Residue Asn-439 participates in substrate binding. The WW domain maps to 752–786 (KTINEPWSMAYSKSQKRKYFYNSKTKNSQFELPVE).

The protein resides in the nucleus. It carries out the reaction a 5'-end (N(7)-methyl 5'-triphosphoguanosine)-ribonucleoside in mRNA + S-adenosyl-L-methionine = a 5'-end (N(7)-methyl 5'-triphosphoguanosine)-(2'-O-methyl-ribonucleoside) in mRNA + S-adenosyl-L-homocysteine + H(+). In terms of biological role, S-adenosyl-L-methionine-dependent methyltransferase that mediates mRNA cap1 2'-O-ribose methylation to the 5'-cap structure of mRNAs. Methylates the ribose of the first nucleotide of a m(7)GpppG-capped mRNA and small nuclear RNA (snRNA) to produce m(7)GpppRm (cap1). Displays a preference for cap0 transcripts. Cap1 modification is linked to higher levels of translation. May be involved in the interferon response pathway. This chain is Cap-specific mRNA (nucleoside-2'-O-)-methyltransferase 1 (cmtr1), found in Xenopus laevis (African clawed frog).